Reading from the N-terminus, the 155-residue chain is Small ribosomal subunit protein uS7 (155 aa).

It belongs to the universal ribosomal protein uS7 family. As to quaternary structure, part of the 30S ribosomal subunit. Contacts proteins S9 and S11.

One of the primary rRNA binding proteins, it binds directly to 16S rRNA where it nucleates assembly of the head domain of the 30S subunit. Is located at the subunit interface close to the decoding center, probably blocks exit of the E-site tRNA. In Xanthomonas axonopodis pv. citri (strain 306), this protein is Small ribosomal subunit protein uS7.